Here is a 64-residue protein sequence, read N- to C-terminus: DTCGSGYNVDQRRTNSGCKAGNGDRHFCGCDRTGVVECKGGKWTEVQDCGSSSCKGTSNGGATC.

Disulfide bonds link Cys-3-Cys-30, Cys-18-Cys-38, Cys-28-Cys-54, and Cys-49-Cys-64.

The protein resides in the secreted. In terms of biological role, may act as a toxin. May recognize a molecule or part of a molecule with a negatively charged surface potential. The polypeptide is Bubble protein (Penicillium brevicompactum).